We begin with the raw amino-acid sequence, 166 residues long: Dynein regulatory complex protein 8 (166 aa).

The region spanning 95–130 (DDYHTLLRAFRAFDPDGRGFIDAESFKSLLTGKGEA) is the EF-hand domain.

This sequence belongs to the DRC8 family. As to quaternary structure, component of the nexin-dynein regulatory complex (N-DRC).

It is found in the cytoplasm. The protein resides in the cytoskeleton. It localises to the flagellum axoneme. Functionally, component of the nexin-dynein regulatory complex (N-DRC), a key regulator of ciliary/flagellar motility which maintains the alignment and integrity of the distal axoneme and regulates microtubule sliding in motile axonemes. The polypeptide is Dynein regulatory complex protein 8 (Chlamydomonas reinhardtii (Chlamydomonas smithii)).